Here is a 344-residue protein sequence, read N- to C-terminus: tRNA N6-adenosine threonylcarbamoyltransferase (344 aa).

Positions 113 and 117 each coordinate Fe cation. Residues 135–139 (LVSGG), D169, G182, D186, and N278 contribute to the substrate site. Position 306 (D306) interacts with Fe cation. A disordered region spans residues 325 to 344 (ESPISVGTDPSLSVETPQVF). Polar residues predominate over residues 326 to 344 (SPISVGTDPSLSVETPQVF).

It belongs to the KAE1 / TsaD family. Fe(2+) serves as cofactor.

The protein resides in the cytoplasm. The catalysed reaction is L-threonylcarbamoyladenylate + adenosine(37) in tRNA = N(6)-L-threonylcarbamoyladenosine(37) in tRNA + AMP + H(+). Functionally, required for the formation of a threonylcarbamoyl group on adenosine at position 37 (t(6)A37) in tRNAs that read codons beginning with adenine. Is involved in the transfer of the threonylcarbamoyl moiety of threonylcarbamoyl-AMP (TC-AMP) to the N6 group of A37, together with TsaE and TsaB. TsaD likely plays a direct catalytic role in this reaction. The protein is tRNA N6-adenosine threonylcarbamoyltransferase of Corynebacterium glutamicum (strain R).